A 754-amino-acid polypeptide reads, in one-letter code: Leucine-rich repeat-containing protein 36 (754 aa).

LRR repeat units lie at residues 51–72 (NLRSLDLSRNLITSLKGIQYLC) and 73–94 (SLQDLNLYYNNIPSLVEVSRLQ). Positions 107 to 146 (NPVVRKDTDYRLFAVYTLQTLEKLDDRTVREGERKAAKLH) constitute an LRRCT domain. Residues 241–255 (REMPSDNHQEDEFRH) show a composition bias toward basic and acidic residues. The segment at 241-270 (REMPSDNHQEDEFRHYSPRQSTVRSPEKMT) is disordered. Residues 600–680 (NDMESLKQKL…EKTVAILHES (81 aa)) adopt a coiled-coil conformation. The segment at 702-734 (YSGKALLPPEKGHHLGRSSPFGKSTLSSSSPVA) is disordered. The segment covering 722–732 (FGKSTLSSSSP) has biased composition (polar residues).

In Homo sapiens (Human), this protein is Leucine-rich repeat-containing protein 36 (LRRC36).